A 217-amino-acid chain; its full sequence is Large ribosomal subunit protein uL3 (217 aa).

Q154 is subject to N5-methylglutamine.

It belongs to the universal ribosomal protein uL3 family. In terms of assembly, part of the 50S ribosomal subunit. Forms a cluster with proteins L14 and L19. Post-translationally, methylated by PrmB.

In terms of biological role, one of the primary rRNA binding proteins, it binds directly near the 3'-end of the 23S rRNA, where it nucleates assembly of the 50S subunit. The chain is Large ribosomal subunit protein uL3 from Burkholderia ambifaria (strain ATCC BAA-244 / DSM 16087 / CCUG 44356 / LMG 19182 / AMMD) (Burkholderia cepacia (strain AMMD)).